Here is a 321-residue protein sequence, read N- to C-terminus: PI-PLC X domain-containing protein 3 (321 aa).

In terms of domain architecture, PI-PLC X-box spans 22–197 (SIHSIPLTNL…DYQVLVFYHS (176 aa)). Catalysis depends on residues histidine 37 and histidine 114.

In Bos taurus (Bovine), this protein is PI-PLC X domain-containing protein 3 (PLCXD3).